A 417-amino-acid polypeptide reads, in one-letter code: Mast cell carboxypeptidase A (417 aa).

The signal sequence occupies residues 1–15; the sequence is MRFFLLMAVIYTTLA. Positions 16-109 are cleaved as a propeptide — activation peptide; sequence IAPVHFDREK…IEKQFDVKDE (94 aa). The Peptidase M14 domain occupies 118–412; that stretch reads KYNDWDKIVS…LSVKFIAKYI (295 aa). 2 disulfides stabilise this stretch: cysteine 173–cysteine 186 and cysteine 245–cysteine 268. Zn(2+) is bound by residues histidine 176 and glutamate 179. Histidine 304 serves as a coordination point for Zn(2+). The active-site Proton donor/acceptor is glutamate 378.

This sequence belongs to the peptidase M14 family. It depends on Zn(2+) as a cofactor.

It is found in the cytoplasmic vesicle. Its subcellular location is the secretory vesicle. The catalysed reaction is Release of a C-terminal amino acid, but little or no action with -Asp, -Glu, -Arg, -Lys or -Pro.. In Mus musculus (Mouse), this protein is Mast cell carboxypeptidase A (Cpa3).